Here is a 595-residue protein sequence, read N- to C-terminus: Sorting nexin-9 (595 aa).

Residues 1 to 62 (MATKARVMYD…PTDYVEILPS (62 aa)) form the SH3 domain. Positions 91 to 201 (SSSAASNNHQ…GNSRASSSSM (111 aa)) are disordered. 2 stretches are compositionally biased toward polar residues: residues 111 to 121 (WSASKSGNWES) and 135 to 145 (QRNTNTPNNWD). Phosphoserine is present on residues S116 and S121. A compositionally biased stretch (acidic residues) spans 160-169 (GDDDDWDEDW). The segment covering 191 to 201 (RGNSRASSSSM) has biased composition (polar residues). S197 and S200 each carry phosphoserine. A critical for tubulation activity region spans residues 201-213 (MKIPLNKFPGFAK). Phosphothreonine is present on T216. Residue Y239 is modified to Phosphotyrosine. Residues 250 to 361 (FDCVVADPRK…QFLNFRDEKE (112 aa)) enclose the PX domain. 3 residues coordinate a 1,2-diacyl-sn-glycero-3-phospho-(1D-myo-inositol-4,5-bisphosphate): R286, K288, and R327. The residue at position 288 (K288) is an N6-acetyllysine. Residues 392 to 595 (LVEIEQKCEA…RQALSRFPVM (204 aa)) enclose the BAR domain.

This sequence belongs to the sorting nexin family. Homodimer, and homooligomer. Heterodimer with SNX18. Interacts with ITCH. Interacts (via SH3 domain) with TNK2, WASL and ACTR3. Identified in a complex with TNK2 and clathrin heavy chains. Identified in a complex with the AP-2 complex, clathrin and DNM2. Interacts (via SH3 domain) with DNM1 and DNM2. Identified in an oligomeric complex containing DNM1 and SNX9. Interacts with FCHSD1. Interacts with ADAM9 and ADAM15 cytoplasmic tails. In terms of processing, ubiquitinated by ITCH. Phosphorylated on tyrosine residues by TNK2. Phosphorylation promotes its activity in the degradation of EGFR. In terms of tissue distribution, widely expressed, with highest levels in heart and placenta, and lowest levels in thymus and peripheral blood leukocytes.

The protein localises to the cytoplasmic vesicle membrane. The protein resides in the cell membrane. Its subcellular location is the cytoplasmic vesicle. It localises to the clathrin-coated vesicle. It is found in the golgi apparatus. The protein localises to the trans-Golgi network. The protein resides in the cell projection. Its subcellular location is the ruffle. It localises to the cytoplasm. Its function is as follows. Involved in endocytosis and intracellular vesicle trafficking, both during interphase and at the end of mitosis. Required for efficient progress through mitosis and cytokinesis. Required for normal formation of the cleavage furrow at the end of mitosis. Plays a role in endocytosis via clathrin-coated pits, but also clathrin-independent, actin-dependent fluid-phase endocytosis. Plays a role in macropinocytosis. Promotes internalization of TNFR. Promotes degradation of EGFR after EGF signaling. Stimulates the GTPase activity of DNM1. Promotes DNM1 oligomerization. Promotes activation of the Arp2/3 complex by WASL, and thereby plays a role in the reorganization of the F-actin cytoskeleton. Binds to membranes enriched in phosphatidylinositol 4,5-bisphosphate and promotes membrane tubulation. Has lower affinity for membranes enriched in phosphatidylinositol 3-phosphate. The polypeptide is Sorting nexin-9 (SNX9) (Homo sapiens (Human)).